We begin with the raw amino-acid sequence, 746 residues long: MRAYPTIQRPSIKRDPRLHALLAGRLHDPFSFLGPHVEHGHWVVRAFHPHAASIWINTDDGFESMTRAHPAGVFEWWGLIPLPLPYQLRIEEASFEAPAHVYDIYDAYAFPPQVSEHDLYLFNEGRLHQAYRMLGSHLVEMEGVAGVRFSVWAPNAERVSVVGSFNRWDGRIHPMVSHGASGVWELFIPGVPTDSFYKYEIRNRDTGAILLKTDPYARHYEVRPGTAARAPSASRMTWGDARWMAQRAVWDWLATPLNIYEVHAGSWKRHANGSFYSYRELADHLLPYVREMGYTHIELLPISEHPLDESWGYQTTGYFAATSRYGTSDDLKFFINACHQEGIGVILDWVPAHFPQDAFALARFDGSALYEHEDPRMGLHQDWGTHIFNYGRNEVKSFLLSSAHYWLSEFHLDGLRVDAVASMLYLDYSRLPGEWLPNRYGGRENLEAIDFLRELNIMVHQEFPGALTLAEESTAWPGVSRPTYVGGLGFSMKWNMGWMNDTLVYMRNDPVYRRFHHEQLTFGQLYAYSENFVLPFSHDEVVHGKGSLLGKMPGDAWQQFANLRLLFTYQMTYPGKKLNFMGNEFAQGREWNSSRELDWYQLGDGWHEGVKMAARDLNQLYSAVAALHQRDFEPEGFSWVDCHDADNSVISYLRFARNGSFALVVLNFTPVPRYRYRIGVPTSGSYQEIFNSDSRYYGGSDLGNMGSIRTTGQPSMERMDSIVITLPPLAGLIFVHTDLPAINTDG.

Catalysis depends on aspartate 418, which acts as the Nucleophile. Glutamate 471 (proton donor) is an active-site residue.

This sequence belongs to the glycosyl hydrolase 13 family. GlgB subfamily. Monomer.

The enzyme catalyses Transfers a segment of a (1-&gt;4)-alpha-D-glucan chain to a primary hydroxy group in a similar glucan chain.. The protein operates within glycan biosynthesis; glycogen biosynthesis. Catalyzes the formation of the alpha-1,6-glucosidic linkages in glycogen by scission of a 1,4-alpha-linked oligosaccharide from growing alpha-1,4-glucan chains and the subsequent attachment of the oligosaccharide to the alpha-1,6 position. This is 1,4-alpha-glucan branching enzyme GlgB from Nitrosospira multiformis (strain ATCC 25196 / NCIMB 11849 / C 71).